A 422-amino-acid polypeptide reads, in one-letter code: Proton-gated ion channel subunit pbo-6 (422 aa).

A signal peptide spans 1-20 (MQCSFLTIFIFITTVTVGVA). The Extracellular portion of the chain corresponds to 21–233 (EFSEQYQGSS…IKVARKPFYY (213 aa)). Cysteine 151 and cysteine 165 are joined by a disulfide. The next 3 membrane-spanning stretches (helical) occupy residues 234 to 254 (LISLVVPSYIICVLSIAGLFA), 268 to 288 (LGVTAILSMAVLSLVVTEKVP), and 294 to 314 (VPLLIVYMHFIIVMVTIATIL). The Cytoplasmic segment spans residues 315–378 (TSTVMRVHAK…GEVSRRMDYL (64 aa)). A helical transmembrane segment spans residues 379–399 (LASVFIIIISTPTLYLFYMCF).

The protein belongs to the ligand-gated ion channel (TC 1.A.9) family. Acetylcholine receptor (TC 1.A.9.1) subfamily. As to quaternary structure, the functional channel is a hetero-oligomer of pbo-5 and pbo-6. As to expression, expressed in the posterior body muscles.

It localises to the membrane. In terms of biological role, forms a proton-gated ion channel with pbo-5 that is activated by acidification of the posterior coelomic space, leading to posterior body wall muscle contraction (pBoc) during the defecation cycle. Not necessary for stimulation of posterior body contraction (pBoc). Does not bind neurotransmitters such as acetylcholine, gamma-aminobutyric acid, glycine, serotonin, glutamate or choline. The chain is Proton-gated ion channel subunit pbo-6 from Caenorhabditis elegans.